The sequence spans 512 residues: Protein singed (512 aa).

It belongs to the fascin family. As to quaternary structure, interacts with Rab35, with stronger binding to the Rab35-GTP form compared to the Rab35-GDP form.

It is found in the cytoplasm. The protein localises to the cytoskeleton. Functionally, acts as an actin bundling protein. May have a role in the asymmetric organization and/or movement of cytoplasmic components. It has a role in somatic cells during the formation of adult bristles and hairs, and in the female germline during oogenesis. This Drosophila melanogaster (Fruit fly) protein is Protein singed (sn).